A 239-amino-acid polypeptide reads, in one-letter code: MAQVSMRDMLQAGVHFGHQTRYWNPKMKPFIFGPRNGVHIINLEKTVPMFNEALVELTRIASNNGRILFVGTKRAASEVVKAAALDCQQYYVNHRWLGGMLTNWKTVRQSIKRLKDLETQSQDGTFDKLTKKEALVRTREMEKLELSLGGIKDMGGLPDAIFVIGADHEHIAIKEANNLGIPVFAIVDTNSSPDGVDFVIPGNDDASRAIQLYLSAATTAVKEGRNQETVTEEVFAAAE.

It belongs to the universal ribosomal protein uS2 family.

The polypeptide is Small ribosomal subunit protein uS2 (Histophilus somni (strain 129Pt) (Haemophilus somnus)).